We begin with the raw amino-acid sequence, 675 residues long: Protein PALS1 (675 aa).

Disordered regions lie at residues 1-32 (MTTS…HPKH) and 52-79 (RSAQ…KQEL). The segment at 1–345 (MTTSYMNGHV…QQIKPPPAKE (345 aa)) is required for the correct localization of PALS1 and PATJ at cell-cell contacts and the normal formation of tight junctions and adherens junctions. Phosphoserine is present on residues Ser14 and Ser25. Residues 21–140 (LGLASPEEHP…LKHIQHTLVD (120 aa)) form an interaction with PARD6B region. Over residues 54 to 79 (AQLERIRQQQEDMRRRREEEGKKQEL) the composition is skewed to basic and acidic residues. 2 positions are modified to phosphoserine: Ser83 and Ser84. L27 domains are found at residues 120 to 177 (KILE…NKAS) and 179 to 235 (PFPL…MQLE). Residues 181-243 (PLIANVQDLV…LEPITDERVY (63 aa)) are interaction with LIN7C. The 81-residue stretch at 256 to 336 (IVRIEKARDI…TLTFVLIPSQ (81 aa)) folds into the PDZ domain. One can recognise an SH3 domain in the interval 345-417 (ETVIHVKAHF…PGKSFQQQRE (73 aa)). Residues 479–660 (KRPIILIGPQ…AYQELLRLIN (182 aa)) enclose the Guanylate kinase-like domain. Position 486–493 (486–493 (GPQNCGQN)) interacts with ATP.

This sequence belongs to the MAGUK family. As to quaternary structure, heterodimer with MPP1. Forms a heterotrimeric complex composed of PALS1, LIN7B and PATJ; the N-terminal L27 domain of PALS1 interacts with the L27 domain of PATJ and the C-terminal L27 domain of PALS1 interacts with the L27 domain of LIN7B. Component of a complex composed of PALS1, CRB1 and MPP4. Component of a complex whose core is composed of ARHGAP17, AMOT, PALS1, PATJ and PARD3/PAR3. Component of a complex composed of PALS1, CRB1 and EPB41L5. Within the complex, interacts (via HOOK domain) with EPB41L5 (via FERM domain), and interacts with CRB1 (via intracellular domain). Component of a complex composed of PALS1, MPP3 and CRB1; PALS1 acts as a bridging protein between MPP3 (via guanylate kinase-like domain) and CRB1. Component of a complex composed of CRB3, PALS1 and PATJ. As part of the Crumbs complex; interacts with WWP1, the interaction is enhanced by AMOTL2 and facilitates WWP1 localization to the plasma membrane. The Crumbs complex promotes monoubiquitination of AMOTL2 by WWP1, which activates the Hippo signaling pathway. Interacts (via PDZ domain) with PATJ (via N-terminus). Interacts with EZR. Interacts (via PDZ domain) with CRB1 (via C-terminal ERLI motif). While the PDZ domain is sufficient for interaction with CRB1, the adjacent SH3 and guanylate kinase-like domains are likely to contribute to a high affinity interaction. Interacts with WWTR1/TAZ (via WW domain). Interacts with MPP7. Interacts (via PDZ domain) with CRB3 (via C-terminus). Interacts with LIN7C. Interacts with MPDZ. Interacts with PARD6B. Interacts with SC6A1. Interacts with CDH5; the interaction promotes PALS1 localization to cell junctions and is required for CDH5-mediated vascular lumen formation and endothelial cell. Interacts with NPHP1 (via coiled coil and SH3 domains). Interacts with NPHP4. Interacts with CRB2.

The protein localises to the golgi apparatus. It is found in the cell membrane. Its subcellular location is the endomembrane system. It localises to the cell junction. The protein resides in the tight junction. The protein localises to the adherens junction. It is found in the cell projection. Its subcellular location is the axon. It localises to the perikaryon. The protein resides in the apical cell membrane. In terms of biological role, plays a role in tight junction biogenesis and in the establishment of cell polarity in epithelial cells. Also involved in adherens junction biogenesis by ensuring correct localization of the exocyst complex protein EXOC4/SEC8 which allows trafficking of adherens junction structural component CDH1 to the cell surface. Plays a role through its interaction with CDH5 in vascular lumen formation and endothelial membrane polarity. Required during embryonic and postnatal retinal development. Required for the maintenance of cerebellar progenitor cells in an undifferentiated proliferative state, preventing premature differentiation, and is required for cerebellar histogenesis, fissure formation, cerebellar layer organization and cortical development. Plays a role in neuronal progenitor cell survival, potentially via promotion of mTOR signaling. Plays a role in the radial and longitudinal extension of the myelin sheath in Schwann cells. May modulate SC6A1/GAT1-mediated GABA uptake by stabilizing the transporter. May play a role in the T-cell receptor-mediated activation of NF-kappa-B. Required for localization of EZR to the apical membrane of parietal cells and may play a role in the dynamic remodeling of the apical cytoskeleton. Required for the normal polarized localization of the vesicular marker STX4. Required for the correct trafficking of the myelin proteins PMP22 and MAG. Involved in promoting phosphorylation and cytoplasmic retention of transcriptional coactivators YAP1 and WWTR1/TAZ which leads to suppression of TGFB1-dependent transcription of target genes such as CCN2/CTGF, SERPINE1/PAI1, SNAI1/SNAIL1 and SMAD7. This chain is Protein PALS1, found in Rattus norvegicus (Rat).